Consider the following 859-residue polypeptide: Toll-like receptor 5 (859 aa).

Residues Met-1 to Ser-26 form the signal peptide. The Extracellular portion of the chain corresponds to Asp-27–Phe-641. N-linked (GlcNAc...) asparagine glycosylation is found at Asn-37, Asn-46, and Asn-84. LRR repeat units lie at residues Leu-45 to Leu-69, Arg-72 to Asn-94, Pro-96 to Gly-118, His-121 to Asn-144, Ser-147 to Phe-167, Ser-172 to Pro-193, Thr-198 to Arg-212, Val-215 to Glu-230, and Ser-235 to Glu-236. A glycan (N-linked (GlcNAc...) asparagine) is linked at Asn-246. 6 LRR repeats span residues Leu-261–Ser-285, Ser-290–Phe-302, Asp-314–Gly-335, Ser-338–Asn-356, Thr-386–Phe-402, and Gly-413–Ser-432. An N-linked (GlcNAc...) asparagine glycan is attached at Asn-343. A glycan (N-linked (GlcNAc...) asparagine) is linked at Asn-438. 5 LRR repeats span residues Gln-450–Ser-471, Ser-475–Trp-496, Arg-504–Asp-525, Ala-528–Leu-547, and Asn-550–Leu-568. The LRRCT domain maps to Asn-580 to Glu-632. Disulfide bonds link Cys-584–Cys-611 and Cys-586–Cys-630. N-linked (GlcNAc...) asparagine glycans are attached at residues Asn-596, Asn-599, and Asn-624. A helical membrane pass occupies residues Ser-642 to Ile-662. The Cytoplasmic segment spans residues Lys-663–Ser-859. The TIR domain occupies Tyr-692–Ile-837. Residue Tyr-799 is modified to Phosphotyrosine.

It belongs to the Toll-like receptor family. In terms of assembly, homodimer. Interacts with MYD88 (via TIR domain). Interacts with TICAM1 (via TIR domain). Interacts with UNC93B1; this interaction is essential for proper TLR5 localization to the plasma membrane. Post-translationally, phosphorylated at Tyr-799 upon flagellin binding; required for signaling. Highly expressed in liver. Detected in lung and at very low levels in most other tissues.

It localises to the membrane. Pattern recognition receptor (PRR) located on the cell surface that participates in the activation of innate immunity and inflammatory response. Recognizes small molecular motifs named pathogen-associated molecular pattern (PAMPs) expressed by pathogens and microbe-associated molecular patterns (MAMPs) usually expressed by resident microbiota. Upon ligand binding such as bacterial flagellins, recruits intracellular adapter proteins MYD88 and TRIF leading to NF-kappa-B activation, cytokine secretion and induction of the inflammatory response. Plays thereby an important role in the relationship between the intestinal epithelium and enteric microbes and contributes to the gut microbiota composition throughout life. This is Toll-like receptor 5 (Tlr5) from Mus musculus (Mouse).